The following is a 158-amino-acid chain: Ribosome-binding factor A (158 aa).

Positions 130–158 (TAQYAGDADPYKHDDEAEAEGDEFESDEE) are disordered. Positions 145–158 (EAEAEGDEFESDEE) are enriched in acidic residues.

The protein belongs to the RbfA family. In terms of assembly, monomer. Binds 30S ribosomal subunits, but not 50S ribosomal subunits or 70S ribosomes.

Its subcellular location is the cytoplasm. One of several proteins that assist in the late maturation steps of the functional core of the 30S ribosomal subunit. Associates with free 30S ribosomal subunits (but not with 30S subunits that are part of 70S ribosomes or polysomes). Required for efficient processing of 16S rRNA. May interact with the 5'-terminal helix region of 16S rRNA. This chain is Ribosome-binding factor A, found in Bifidobacterium longum subsp. infantis (strain ATCC 15697 / DSM 20088 / JCM 1222 / NCTC 11817 / S12).